The sequence spans 453 residues: Bifunctional protein GlmU (453 aa).

Residues 1–227 form a pyrophosphorylase region; the sequence is MNKLSVVILA…LMEVEGVNNR (227 aa). UDP-N-acetyl-alpha-D-glucosamine contacts are provided by residues 9 to 12, lysine 23, glutamine 74, 79 to 80, 101 to 103, glycine 138, glutamate 152, asparagine 167, and asparagine 225; these read LAAG, GT, and YGD. Mg(2+) is bound at residue aspartate 103. Asparagine 225 lines the Mg(2+) pocket. A linker region spans residues 228-248; it reads LQLANLERHYQRKQVEKLLLA. The segment at 249-453 is N-acetyltransferase; the sequence is GVTFADPARF…ISNWQRPKRK (205 aa). The UDP-N-acetyl-alpha-D-glucosamine site is built by arginine 331 and lysine 349. Histidine 361 functions as the Proton acceptor in the catalytic mechanism. Positions 364 and 375 each coordinate UDP-N-acetyl-alpha-D-glucosamine. Acetyl-CoA contacts are provided by residues alanine 378, 384-385, serine 403, alanine 421, and arginine 438; that span reads NY.

The protein in the N-terminal section; belongs to the N-acetylglucosamine-1-phosphate uridyltransferase family. It in the C-terminal section; belongs to the transferase hexapeptide repeat family. Homotrimer. Mg(2+) is required as a cofactor.

The protein localises to the cytoplasm. It carries out the reaction alpha-D-glucosamine 1-phosphate + acetyl-CoA = N-acetyl-alpha-D-glucosamine 1-phosphate + CoA + H(+). The catalysed reaction is N-acetyl-alpha-D-glucosamine 1-phosphate + UTP + H(+) = UDP-N-acetyl-alpha-D-glucosamine + diphosphate. The protein operates within nucleotide-sugar biosynthesis; UDP-N-acetyl-alpha-D-glucosamine biosynthesis; N-acetyl-alpha-D-glucosamine 1-phosphate from alpha-D-glucosamine 6-phosphate (route II): step 2/2. It participates in nucleotide-sugar biosynthesis; UDP-N-acetyl-alpha-D-glucosamine biosynthesis; UDP-N-acetyl-alpha-D-glucosamine from N-acetyl-alpha-D-glucosamine 1-phosphate: step 1/1. It functions in the pathway bacterial outer membrane biogenesis; LPS lipid A biosynthesis. Functionally, catalyzes the last two sequential reactions in the de novo biosynthetic pathway for UDP-N-acetylglucosamine (UDP-GlcNAc). The C-terminal domain catalyzes the transfer of acetyl group from acetyl coenzyme A to glucosamine-1-phosphate (GlcN-1-P) to produce N-acetylglucosamine-1-phosphate (GlcNAc-1-P), which is converted into UDP-GlcNAc by the transfer of uridine 5-monophosphate (from uridine 5-triphosphate), a reaction catalyzed by the N-terminal domain. The protein is Bifunctional protein GlmU of Histophilus somni (strain 2336) (Haemophilus somnus).